A 267-amino-acid chain; its full sequence is Lectin SfL-2 (267 aa).

Tandem repeats lie at residues 1-67 (GRYT…RRGE), 68-135 (SNNY…QAEG), 136-202 (DTYN…LTGA), and 203-267 (NNYK…GVAN). The tract at residues 1 to 267 (GRYTVQNQWG…GPIGFKGVAN (267 aa)) is 4 X approximate tandem repeats.

As to quaternary structure, monomer.

Its function is as follows. Lectin specific for high mannose N-glycans, recognizes the branched moiety of these glycans. Does not recognize other types of N-glycans or monosaccharides. The sequence is that of Lectin SfL-2 from Solieria filiformis (Red alga).